Here is a 227-residue protein sequence, read N- to C-terminus: MSTVVSEGRNDGNNRYSPQDEVEDRLPDVVDNRLTENMRVPSFERLPSPTPRYFGSCKWFNVSKGYGFVIDDITGEDLFVHQSNLNMQGFRSLDEGERVSYYIQERSNGKGREAYAVSGEVEGQGLKGSRIHPLGRKKAVSLRCFRCGKFATHKAKSCPNVKTDAKVCYTCGSEEHVSSICPERRRKHRPEQVAAEEAEAARMAAEKSSPTTSDDDIREKNSNSSDE.

Positions 1–17 are enriched in polar residues; sequence MSTVVSEGRNDGNNRYS. The disordered stretch occupies residues 1–27; it reads MSTVVSEGRNDGNNRYSPQDEVEDRLP. The CSD domain occupies 52 to 120; it reads RYFGSCKWFN…GREAYAVSGE (69 aa). CCHC-type zinc fingers lie at residues 143 to 160 and 166 to 183; these read RCFRCGKFATHKAKSCPN and KVCYTCGSEEHVSSICPE. Positions 144, 147, 153, 158, 168, 171, 176, and 181 each coordinate Zn(2+). A disordered region spans residues 181–227; sequence CPERRRKHRPEQVAAEEAEAARMAAEKSSPTTSDDDIREKNSNSSDE.

It belongs to the lin-28 family. In terms of assembly, component of a complex at least containing lep-2, lin-28 and the long non-coding RNA lep-5, which mediates the degradation of lin-28. In terms of processing, cleavage by caspase ced-3 during larval development probably induces lin-28 degradation.

The protein resides in the cytoplasm. Its function is as follows. Heterochronic protein which controls the choice of stage specific cell fates. Regulates the timing of the second larval stage events (L2 events) in the hypodermis. May negatively regulate the larval to adult transition via the suppression of the microRNA (miRNA) let-7 during L3. Through this regulatory role, controls the timing of the sexual maturation of the nervous system. Also has a role in the fox-1-sex-1-mediated determination of sexual fate. Plays a role in governing the developmental timing of male tail tip morphogenesis. Plays a role in controlling the seam cell number during larval stages. Plays a role in vulval development. The protein is Protein lin-28 of Caenorhabditis elegans.